The sequence spans 243 residues: 1-(5-phosphoribosyl)-5-[(5-phosphoribosylamino)methylideneamino] imidazole-4-carboxamide isomerase (243 aa).

The active-site Proton acceptor is Asp-8. Residue Asp-129 is the Proton donor of the active site.

It belongs to the HisA/HisF family.

The protein localises to the cytoplasm. The catalysed reaction is 1-(5-phospho-beta-D-ribosyl)-5-[(5-phospho-beta-D-ribosylamino)methylideneamino]imidazole-4-carboxamide = 5-[(5-phospho-1-deoxy-D-ribulos-1-ylimino)methylamino]-1-(5-phospho-beta-D-ribosyl)imidazole-4-carboxamide. It functions in the pathway amino-acid biosynthesis; L-histidine biosynthesis; L-histidine from 5-phospho-alpha-D-ribose 1-diphosphate: step 4/9. The polypeptide is 1-(5-phosphoribosyl)-5-[(5-phosphoribosylamino)methylideneamino] imidazole-4-carboxamide isomerase (Brucella abortus (strain 2308)).